We begin with the raw amino-acid sequence, 138 residues long: Large ribosomal subunit protein uL16 (138 aa).

Residues 1 to 15 show a composition bias toward basic residues; the sequence is MLSPKKVKYRKKQRG. A disordered region spans residues 1 to 21; sequence MLSPKKVKYRKKQRGRLSGEA.

Belongs to the universal ribosomal protein uL16 family. In terms of assembly, part of the 50S ribosomal subunit.

In terms of biological role, binds 23S rRNA and is also seen to make contacts with the A and possibly P site tRNAs. In Borrelia garinii subsp. bavariensis (strain ATCC BAA-2496 / DSM 23469 / PBi) (Borreliella bavariensis), this protein is Large ribosomal subunit protein uL16.